The following is a 1063-amino-acid chain: Structural polyprotein (1063 aa).

The segment at 1-131 (MASTTPITME…LGPPTNPFQA (131 aa)) is disordered. The interval 30 to 69 (GASQSRRPRPPRQRDSSTSGDDSGRDSGGPRRRRGNRGRG) is human C1QBP/SF2P32-binding. A Phosphoserine; by host modification is found at Ser-46. The span at 59–69 (PRRRRGNRGRG) shows a compositional bias: basic residues. Over residues 93-107 (APKPSRAPPQQPQPP) the composition is skewed to pro residues. Residues Cys-153 and Cys-197 are joined by a disulfide bond. A functions as E2 signal peptide region spans residues 279 to 300 (GAPQAFLAGLLLAAVAVGTARA). The Extracellular portion of the chain corresponds to 301-534 (GLQPRADMAA…LWLATANALS (234 aa)). Positions 305-347 (RADMAAPPAPPQPPCAHGQHYGHHHHQLPFLGHDGHHGGTLRV) are disordered. N-linked (GlcNAc...) asparagine; by host glycosylation is found at Asn-353, Asn-371, Asn-410, and Asn-429. The helical transmembrane segment at 535 to 555 (LDHALAAFVLLFPWVLIFMVC) threads the bilayer. Over 556-582 (RRACRRRGAAAALTAVVLQGYNPPAYG) the chain is Cytoplasmic. Residues 563 to 582 (GAAAALTAVVLQGYNPPAYG) form a functions as E1 signal peptide region. Residues 583-1028 (EEAFTYLCTA…QTWAEWAAAH (446 aa)) lie on the Extracellular side of the membrane. Intrachain disulfides connect Cys-590–Cys-595, Cys-619–Cys-824, Cys-641–Cys-653, Cys-699–Cys-712, Cys-758–Cys-767, Cys-807–Cys-817, Cys-931–Cys-934, and Cys-950–Cys-983. Asn-658 is a glycosylation site (N-linked (GlcNAc...) asparagine; by host). Asn-670 and Ala-671 together coordinate Ca(2+). Residues Asp-718 and Thr-719 each contribute to the Ca(2+) site. Asn-759 and Asn-791 each carry an N-linked (GlcNAc...) asparagine; by host glycan. O-linked (GalNAc...) threonine; by host glycosylation is found at Thr-1011 and Thr-1012. Residues 1029–1049 (WWQLTLGAVCALLLAGLLACC) traverse the membrane as a helical segment. The Extracellular segment spans residues 1050–1063 (AKCLYYLRGAIAPR).

Homodimer; further assembles into homooligomer. Interacts with human C1QBP. Interacts (via N-terminus) with protease/methyltransferase p150. As to quaternary structure, heterodimer with spike glycoprotein E2. In terms of assembly, heterodimer with spike glycoprotein E1. Structural polyprotein: Specific enzymatic cleavages in vivo yield mature proteins. Two signal peptidase-mediated cleavages within the polyprotein produce the structural proteins capsid, E2, and E1. The E2 signal peptide remains attached to the C-terminus of the capsid protein after cleavage by the signal peptidase. Another signal peptide at E2 C-terminus directs E1 to the ER, with a similar mechanism. Post-translationally, contains three N-linked oligosaccharides. In terms of processing, capsid is phosphorylated on Ser-46 by host. This phosphorylation negatively regulates capsid protein RNA-binding activity. Dephosphorylated by human PP1A.

It localises to the virion. The protein localises to the host cytoplasm. It is found in the host mitochondrion. Its subcellular location is the virion membrane. The protein resides in the host Golgi apparatus membrane. Its function is as follows. Capsid protein interacts with genomic RNA and assembles into icosahedric core particles 65-70 nm in diameter. The resulting nucleocapsid eventually associates with the cytoplasmic domain of E2 at the cell membrane, leading to budding and formation of mature virions from host Golgi membranes. Phosphorylation negatively regulates RNA-binding activity, possibly delaying virion assembly during the viral replication phase. Capsid protein dimerizes and becomes disulfide-linked in the virion. Modulates genomic RNA replication. Modulates subgenomic RNA synthesis by interacting with human C1QBP/SF2P32. Induces both perinuclear clustering of mitochondria and the formation of electron-dense intermitochondrial plaques, both hallmarks of rubella virus infected cells. Induces apoptosis when expressed in transfected cells. Functionally, responsible for viral attachment to target host cell, by binding to the cell receptor. Its transport to the plasma membrane depends on interaction with E1 protein. The surface glycoproteins display an irregular helical organization and a pseudo-tetrameric inner nucleocapsid arrangement. Class II viral fusion protein. Fusion activity is inactive as long as E1 is bound to E2 in mature virion. After virus attachment to target cell and clathrin-mediated endocytosis, acidification of the endosome would induce dissociation of E1/E2 heterodimer and concomitant trimerization of the E1 subunits. This E1 homotrimer is fusion active, and promotes release of viral nucleocapsid in cytoplasm after endosome and viral membrane fusion. The cytoplasmic tail of spike glycoprotein E1 modulates virus release. The surface glycoproteins display an irregular helical organization and a pseudo-tetrameric inner nucleocapsid arrangement. This is Structural polyprotein from Rubella virus (strain RN-UK86) (RUBV).